The primary structure comprises 448 residues: Glutamate--tRNA ligase 1 (448 aa).

A 'HIGH' region motif is present at residues 10-20 (PSPTGMLHVGN). Residues 240 to 244 (KISKR) carry the 'KMSKS' region motif. Position 243 (Lys-243) interacts with ATP.

The protein belongs to the class-I aminoacyl-tRNA synthetase family. Glutamate--tRNA ligase type 1 subfamily. As to quaternary structure, monomer.

The protein resides in the cytoplasm. The enzyme catalyses tRNA(Glu) + L-glutamate + ATP = L-glutamyl-tRNA(Glu) + AMP + diphosphate. Catalyzes the attachment of glutamate to tRNA(Glu) in a two-step reaction: glutamate is first activated by ATP to form Glu-AMP and then transferred to the acceptor end of tRNA(Glu). The protein is Glutamate--tRNA ligase 1 of Rickettsia typhi (strain ATCC VR-144 / Wilmington).